Consider the following 64-residue polypeptide: Prokaryotic ubiquitin-like protein UBact (64 aa).

Residues 1–64 (MFNGEEVILF…SERYRQRTGE (64 aa)) are disordered. Positions 22-64 (REIHKDAPAPKRPETKKTGDRLMDRMKKVDPNQSERYRQRTGE) are enriched in basic and acidic residues. An Isoglutamyl lysine isopeptide (Glu-Lys) (interchain with K-? in acceptor proteins) cross-link involves residue Glu-64.

It belongs to the ubiquitin-like protein UBact family.

Its function is as follows. May function as a protein modifier covalently attached to lysine residues of substrate proteins. This may serve to target the modified proteins for degradation by proteasomes. This is Prokaryotic ubiquitin-like protein UBact from Leptospirillum ferriphilum (strain ML-04).